A 352-amino-acid chain; its full sequence is Probable gamma-glutamyl hydrolase 3 (352 aa).

Positions 1-19 are cleaved as a signal peptide; that stretch reads MWRFCFFLSLLFFDVSAVK. One can recognise a Gamma-glutamyl hydrolase domain in the interval 49-352; sequence AADPNLNYKP…SGDDEVYIFT (304 aa). Catalysis depends on Cys166, which acts as the Nucleophile. Residue His279 is part of the active site.

Belongs to the peptidase C26 family.

The protein localises to the vacuole. It localises to the secreted. It is found in the extracellular space. The protein resides in the cell wall. It catalyses the reaction (6S)-5,6,7,8-tetrahydrofolyl-(gamma-L-Glu)(n) + (n-1) H2O = (6S)-5,6,7,8-tetrahydrofolate + (n-1) L-glutamate. Functionally, cleaves the polyglutamate sidechains of folate polyglutamates in the vacuole. Is important for polyglutamyl tail length determination before vacuolar exit. Plays a role on folate stability and intracellular folate content. In Arabidopsis thaliana (Mouse-ear cress), this protein is Probable gamma-glutamyl hydrolase 3 (GGH3).